The following is a 244-amino-acid chain: Ureidoacrylate amidohydrolase RutB (244 aa).

Catalysis depends on D38, which acts as the Proton acceptor. K147 is an active-site residue. Residue C180 is the Nucleophile of the active site.

Belongs to the isochorismatase family. RutB subfamily.

The catalysed reaction is (Z)-3-ureidoacrylate + H2O + H(+) = (Z)-3-aminoacrylate + NH4(+) + CO2. It carries out the reaction (Z)-3-ureidoacrylate + H2O = (Z)-3-aminoacrylate + carbamate + H(+). The enzyme catalyses (Z)-2-methylureidoacrylate + H2O + H(+) = (Z)-2-methylaminoacrylate + NH4(+) + CO2. In terms of biological role, hydrolyzes ureidoacrylate to form aminoacrylate and carbamate. The carbamate hydrolyzes spontaneously, thereby releasing one of the nitrogen atoms of the pyrimidine ring as ammonia and one of its carbon atoms as CO2. The chain is Ureidoacrylate amidohydrolase RutB from Escherichia coli O1:K1 / APEC.